Reading from the N-terminus, the 110-residue chain is Class I hydrophobin 2 (110 aa).

Residues M1–A19 form the signal peptide. 4 cysteine pairs are disulfide-bonded: C29–C89, C36–C83, C37–C70, and C90–C103.

Belongs to the fungal hydrophobin family. Self-assembles to form functional amyloid fibrils called rodlets. Self-assembly into fibrillar rodlets occurs spontaneously at hydrophobic:hydrophilic interfaces and the rodlets further associate laterally to form amphipathic monolayers.

The protein resides in the secreted. Its subcellular location is the cell wall. Functionally, aerial growth, conidiation, and dispersal of filamentous fungi in the environment rely upon a capability of their secreting small amphipathic proteins called hydrophobins (HPBs) with low sequence identity. Class I can self-assemble into an outermost layer of rodlet bundles on aerial cell surfaces, conferring cellular hydrophobicity that supports fungal growth, development and dispersal; whereas Class II form highly ordered films at water-air interfaces through intermolecular interactions but contribute nothing to the rodlet structure. Pnh2 is a class I hydrophobin that might be involved in the attachment of the hydrophilic wall of hyphae to the hydrophobic surface of wood under inorganic phosphate (Pi)-deficient conditions and enable the mycelium to degrade efficiently the components of wood and to acquire nutrients containing Pi. The sequence is that of Class I hydrophobin 2 from Pholiota nameko.